Consider the following 58-residue polypeptide: Large ribosomal subunit protein bL32 (58 aa).

Over residues 1–15 (MAVPKKKTSKAKRNQ) the composition is skewed to basic residues. Positions 1–23 (MAVPKKKTSKAKRNQRSATWKGK) are disordered.

Belongs to the bacterial ribosomal protein bL32 family.

The protein is Large ribosomal subunit protein bL32 of Synechococcus sp. (strain CC9902).